We begin with the raw amino-acid sequence, 201 residues long: Urease accessory protein UreG (201 aa).

A GTP-binding site is contributed by 11–18 (GPVGSGKT).

The protein belongs to the SIMIBI class G3E GTPase family. UreG subfamily. As to quaternary structure, homodimer. UreD, UreF and UreG form a complex that acts as a GTP-hydrolysis-dependent molecular chaperone, activating the urease apoprotein by helping to assemble the nickel containing metallocenter of UreC. The UreE protein probably delivers the nickel.

It localises to the cytoplasm. Its function is as follows. Facilitates the functional incorporation of the urease nickel metallocenter. This process requires GTP hydrolysis, probably effectuated by UreG. This Prochlorococcus marinus subsp. pastoris (strain CCMP1986 / NIES-2087 / MED4) protein is Urease accessory protein UreG.